A 554-amino-acid chain; its full sequence is Phenylalanine--tRNA ligase beta subunit (554 aa).

Residues 276-351 (LSLKSRMISV…INYGYEKFEG (76 aa)) form the B5 domain. Mg(2+) is bound by residues Asp-329, Asp-335, Glu-338, and Glu-339.

This sequence belongs to the phenylalanyl-tRNA synthetase beta subunit family. Type 2 subfamily. Tetramer of two alpha and two beta subunits. The cofactor is Mg(2+).

Its subcellular location is the cytoplasm. It carries out the reaction tRNA(Phe) + L-phenylalanine + ATP = L-phenylalanyl-tRNA(Phe) + AMP + diphosphate + H(+). This Methanococcus maripaludis (strain C5 / ATCC BAA-1333) protein is Phenylalanine--tRNA ligase beta subunit.